A 179-amino-acid chain; its full sequence is Large ribosomal subunit protein uL5 (179 aa).

This sequence belongs to the universal ribosomal protein uL5 family. As to quaternary structure, part of the 50S ribosomal subunit; part of the 5S rRNA/L5/L18/L25 subcomplex. Contacts the 5S rRNA and the P site tRNA. Forms a bridge to the 30S subunit in the 70S ribosome.

In terms of biological role, this is one of the proteins that bind and probably mediate the attachment of the 5S RNA into the large ribosomal subunit, where it forms part of the central protuberance. In the 70S ribosome it contacts protein S13 of the 30S subunit (bridge B1b), connecting the 2 subunits; this bridge is implicated in subunit movement. Contacts the P site tRNA; the 5S rRNA and some of its associated proteins might help stabilize positioning of ribosome-bound tRNAs. The protein is Large ribosomal subunit protein uL5 of Yersinia pestis.